We begin with the raw amino-acid sequence, 94 residues long: Defensin-like protein 21 (94 aa).

Positions 1–26 are cleaved as a signal peptide; it reads MVRTNVVSFVLFAAIVLCIGSIQIDG. Cystine bridges form between C41–C92, C51–C79, C65–C88, and C69–C90.

Belongs to the DEFL family.

The protein resides in the secreted. In Arabidopsis thaliana (Mouse-ear cress), this protein is Defensin-like protein 21.